Reading from the N-terminus, the 553-residue chain is Urocanate hydratase (553 aa).

NAD(+) is bound by residues 45 to 46 (GG), Q123, 169 to 171 (GMG), D189, R194, 235 to 236 (NA), 256 to 260 (QTSAH), 266 to 267 (YV), Y315, and G485.

This sequence belongs to the urocanase family. The cofactor is NAD(+).

It localises to the cytoplasm. It catalyses the reaction 4-imidazolone-5-propanoate = trans-urocanate + H2O. Its pathway is amino-acid degradation; L-histidine degradation into L-glutamate; N-formimidoyl-L-glutamate from L-histidine: step 2/3. In terms of biological role, catalyzes the conversion of urocanate to 4-imidazolone-5-propionate. The chain is Urocanate hydratase from Staphylococcus aureus (strain Mu50 / ATCC 700699).